We begin with the raw amino-acid sequence, 236 residues long: Phosphoribosylaminoimidazole-succinocarboxamide synthase (236 aa).

This sequence belongs to the SAICAR synthetase family.

It catalyses the reaction 5-amino-1-(5-phospho-D-ribosyl)imidazole-4-carboxylate + L-aspartate + ATP = (2S)-2-[5-amino-1-(5-phospho-beta-D-ribosyl)imidazole-4-carboxamido]succinate + ADP + phosphate + 2 H(+). Its pathway is purine metabolism; IMP biosynthesis via de novo pathway; 5-amino-1-(5-phospho-D-ribosyl)imidazole-4-carboxamide from 5-amino-1-(5-phospho-D-ribosyl)imidazole-4-carboxylate: step 1/2. In Chlorobium phaeobacteroides (strain BS1), this protein is Phosphoribosylaminoimidazole-succinocarboxamide synthase.